The following is a 200-amino-acid chain: Probable GTP-binding protein EngB (200 aa).

Residues 26–200 form the EngB-type G domain; sequence SIPEIAIAGR…IYEIAQCIKK (175 aa). GTP is bound by residues 34–41, 61–65, 80–83, 147–150, and 176–179; these read GRSNVGKS, GCTKQ, DLPG, TKID, and VISA. Mg(2+)-binding residues include serine 41 and threonine 63.

The protein belongs to the TRAFAC class TrmE-Era-EngA-EngB-Septin-like GTPase superfamily. EngB GTPase family. It depends on Mg(2+) as a cofactor.

Functionally, necessary for normal cell division and for the maintenance of normal septation. This chain is Probable GTP-binding protein EngB, found in Ehrlichia canis (strain Jake).